Reading from the N-terminus, the 290-residue chain is Ribosomal protein L11 methyltransferase (290 aa).

S-adenosyl-L-methionine-binding residues include T136, G157, D179, and N222.

The protein belongs to the methyltransferase superfamily. PrmA family.

The protein resides in the cytoplasm. The catalysed reaction is L-lysyl-[protein] + 3 S-adenosyl-L-methionine = N(6),N(6),N(6)-trimethyl-L-lysyl-[protein] + 3 S-adenosyl-L-homocysteine + 3 H(+). Methylates ribosomal protein L11. This Porphyromonas gingivalis (strain ATCC BAA-308 / W83) protein is Ribosomal protein L11 methyltransferase.